Consider the following 296-residue polypeptide: Giardin subunit alpha-4 (296 aa).

4 Annexin repeats span residues 3-72 (ATVS…VHAW), 74-146 (SRFE…GWVK), 153-223 (KSIK…AHHW), and 226-294 (DPGQ…VFWR).

It belongs to the annexin family. Giardin subunit alpha subfamily.

It is found in the cytoplasm. Its subcellular location is the cytoskeleton. Its function is as follows. Giardins are involved in parasite attachment to the intestinal mucosa and in the cytoskeletal disassembly and reassembly that marks the transition from infectious trophozoite to transmissible cyst. They may interact with other cytoskeletal proteins such as microtubules in the microribbons or crossbridges, to maintain the integrity of the ventral disk. The sequence is that of Giardin subunit alpha-4 from Giardia intestinalis (Giardia lamblia).